We begin with the raw amino-acid sequence, 251 residues long: Orotidine 5'-phosphate decarboxylase (251 aa).

Substrate contacts are provided by residues Asp-19, Lys-42, Asp-69–Thr-78, Thr-133, Arg-194, Gln-204, Gly-224, and Arg-225. Lys-71 acts as the Proton donor in catalysis.

This sequence belongs to the OMP decarboxylase family. Type 1 subfamily. In terms of assembly, homodimer.

It catalyses the reaction orotidine 5'-phosphate + H(+) = UMP + CO2. The protein operates within pyrimidine metabolism; UMP biosynthesis via de novo pathway; UMP from orotate: step 2/2. In terms of biological role, catalyzes the decarboxylation of orotidine 5'-monophosphate (OMP) to uridine 5'-monophosphate (UMP). This chain is Orotidine 5'-phosphate decarboxylase, found in Syntrophus aciditrophicus (strain SB).